Consider the following 222-residue polypeptide: MTNNSKICLVSLICISGIYFGYQYYQNSKPVITIYPDNLPPKIRPSIIENNQVASVYSNIYENLITQDTNIQTVKLLPDPEQPMIIDSRNQSQNDKIFDRMSTLIPLIESNNNAKNATDLNIIKLEKVIKDKVSNAQNCRSNAGYKVQLGSVKSEAEAMAEGAKIKKKFPKILKNVVITTKKVKYDDGKFFYLILAGEYSSLSQAQAVCKKLAYNKQSCVLK.

A helical transmembrane segment spans residues 7–26; the sequence is ICLVSLICISGIYFGYQYYQ. An SPOR domain is found at 139 to 222; the sequence is CRSNAGYKVQ…AYNKQSCVLK (84 aa).

It localises to the membrane. This is an uncharacterized protein from Rickettsia prowazekii (strain Madrid E).